Here is a 2345-residue protein sequence, read N- to C-terminus: Nonribisomal peptide synthetase malG (2345 aa).

The tract at residues 226-620 (FSEQAKKNPT…VGRMGTVVKV (395 aa)) is adenylation 1. The Carrier 1 domain maps to 766–839 (TENETLLRLL…EAAGTMISAG (74 aa)). Ser-800 bears the O-(pantetheine 4'-phosphoryl)serine mark. A condensation 1 region spans residues 877 to 1292 (EEIYPSTPLQ…LLCPSDKSKL (416 aa)). Positions 1317 to 1707 (VRSERTAVSA…GRKNREVKLR (391 aa)) are adenylation 2. The Carrier 2 domain maps to 1843-1926 (QPHESTALFV…DIARLIEGVK (84 aa)). An O-(pantetheine 4'-phosphoryl)serine modification is found at Ser-1885. Positions 1969–2256 (GMSVFLTGGT…PRQLNALQSE (288 aa)) are reductase (R) domain.

Belongs to the NRP synthetase family.

It carries out the reaction L-proline + L-tryptophan + 2 ATP + NADPH = (S)-3-(indol-3-ylmethyl)-6,7,8,8a-tetrahydropyrrolo[1,2-a]pyrazin-1-one + 2 AMP + 2 diphosphate + NADP(+) + H2O + H(+). In terms of biological role, nonribisomal peptide synthetase; part of the gene cluster that mediates the biosynthesis of malbrancheamide, a dichlorinated fungal indole alkaloid that belongs to a family of natural products containing a characteristic bicyclo[2.2.2]diazaoctane core. The first step of malbrancheamide biosynthesis involves coupling of L-proline and L-tryptophan by malG, a bimodular NRPS, to produce L-Pro-L-Trp aldehyde through reductive offloading. This compound undergoes spontaneous cyclization and dehydration to give a dienamine which is reverse prenylated at C-2 by malE. The other prenyltransferase present in the cluster, malB, displays modest activity, suggesting that may be a redundant gene in the pathway. Subsequently, a [4+2] Diels-Alder cyclo-addition catalyzed by the bifunctional enzyme malC forms the characteristic bicyclo[2.2.2]diazaoctane ring of premalbrancheamid. Finally, the flavin-dependent halogenase malA catalyzes the iterative dichlorination of the indole ring of premalbrancheamide to yield C-9 monochlorinated malbrancheamide B, C-8 monochlorinated isomalbrancheamide B, and dichlorinated malbrancheamide. MalA is also able to brominate premalbrancheamide at C-9 to yield malbrancheamide C, and, to a lesser extend, at C-8 to yield isomalbrancheamide C. Finally, malA can brominate C-9 monochlorinated malbrancheamide B at C-8 to yield malbrancheamide D, or C-8 monochlorinated isomalbrancheamide B at C-9 to produce isomalbrancheamide D. The protein is Nonribisomal peptide synthetase malG of Malbranchea aurantiaca.